The sequence spans 249 residues: 5'-nucleotidase SurE 2 (249 aa).

A divalent metal cation contacts are provided by Asp-8, Asp-9, Ser-40, and Asn-90.

It belongs to the SurE nucleotidase family. The cofactor is a divalent metal cation.

The protein resides in the cytoplasm. The enzyme catalyses a ribonucleoside 5'-phosphate + H2O = a ribonucleoside + phosphate. Its function is as follows. Nucleotidase that shows phosphatase activity on nucleoside 5'-monophosphates. In Pyrobaculum aerophilum (strain ATCC 51768 / DSM 7523 / JCM 9630 / CIP 104966 / NBRC 100827 / IM2), this protein is 5'-nucleotidase SurE 2.